Reading from the N-terminus, the 202-residue chain is Orotate phosphoribosyltransferase (202 aa).

Residues lysine 93 and 113–121 (EDIITTGGS) contribute to the 5-phospho-alpha-D-ribose 1-diphosphate site. Residues threonine 117 and arginine 145 each contribute to the orotate site.

The protein belongs to the purine/pyrimidine phosphoribosyltransferase family. PyrE subfamily. As to quaternary structure, homodimer. Mg(2+) is required as a cofactor.

It carries out the reaction orotidine 5'-phosphate + diphosphate = orotate + 5-phospho-alpha-D-ribose 1-diphosphate. The protein operates within pyrimidine metabolism; UMP biosynthesis via de novo pathway; UMP from orotate: step 1/2. Functionally, catalyzes the transfer of a ribosyl phosphate group from 5-phosphoribose 1-diphosphate to orotate, leading to the formation of orotidine monophosphate (OMP). The sequence is that of Orotate phosphoribosyltransferase from Campylobacter curvus (strain 525.92).